The primary structure comprises 443 residues: ATP-dependent protease ATPase subunit HslU (443 aa).

ATP contacts are provided by residues I18, G60–E65, D256, E321, and R393.

The protein belongs to the ClpX chaperone family. HslU subfamily. In terms of assembly, a double ring-shaped homohexamer of HslV is capped on each side by a ring-shaped HslU homohexamer. The assembly of the HslU/HslV complex is dependent on binding of ATP.

The protein resides in the cytoplasm. ATPase subunit of a proteasome-like degradation complex; this subunit has chaperone activity. The binding of ATP and its subsequent hydrolysis by HslU are essential for unfolding of protein substrates subsequently hydrolyzed by HslV. HslU recognizes the N-terminal part of its protein substrates and unfolds these before they are guided to HslV for hydrolysis. In Photorhabdus laumondii subsp. laumondii (strain DSM 15139 / CIP 105565 / TT01) (Photorhabdus luminescens subsp. laumondii), this protein is ATP-dependent protease ATPase subunit HslU.